Here is a 1432-residue protein sequence, read N- to C-terminus: uncharacterized protein (1432 aa).

Disordered stretches follow at residues 1 to 72 (MDTI…NYYN), 208 to 237 (NKIE…NNGQ), 280 to 335 (ERNE…ENNL), 531 to 607 (IVKS…NNSS), 690 to 712 (QNKS…TTTT), 738 to 801 (NNTL…NGGR), 896 to 950 (QSNN…SPPT), 1044 to 1076 (NINS…NNNN), and 1303 to 1359 (NNNN…NTTP). Composition is skewed to low complexity over residues 14-72 (INNN…NYYN), 208-225 (NKIE…NNEN), and 284-300 (LTSP…LPSS). The segment covering 315 to 325 (QEEEEEEEEED) has biased composition (acidic residues). 5 stretches are compositionally biased toward low complexity: residues 536–575 (SSSN…NKNK), 583–607 (DNNT…NNSS), 691–712 (NKSP…TTTT), 744–779 (NMNN…NSNN), and 896–944 (QSNN…SSSN). Residues 1311–1320 (NGNGNGGING) are compositionally biased toward gly residues. Residues 1321–1333 (NNGNNSGSNNKEN) are compositionally biased toward low complexity. The span at 1334 to 1346 (GGTGAGIGGGGGL) shows a compositional bias: gly residues. Residues 1347–1359 (QLPNNNNNNNTTP) show a composition bias toward low complexity.

This is an uncharacterized protein from Dictyostelium discoideum (Social amoeba).